A 485-amino-acid chain; its full sequence is tRNA sulfurtransferase (485 aa).

The 105-residue stretch at 63-167 (DKLVERLSCM…NELLYLVTAI (105 aa)) folds into the THUMP domain. Residues 185–186 (LI), lysine 267, glycine 289, and glutamine 298 each bind ATP. Cysteine 346 and cysteine 458 are oxidised to a cystine. The 80-residue stretch at 406–485 (LAENEVILDI…FNNIKVYRQN (80 aa)) folds into the Rhodanese domain. Cysteine 458 acts as the Cysteine persulfide intermediate in catalysis.

Belongs to the ThiI family.

It localises to the cytoplasm. The catalysed reaction is [ThiI sulfur-carrier protein]-S-sulfanyl-L-cysteine + a uridine in tRNA + 2 reduced [2Fe-2S]-[ferredoxin] + ATP + H(+) = [ThiI sulfur-carrier protein]-L-cysteine + a 4-thiouridine in tRNA + 2 oxidized [2Fe-2S]-[ferredoxin] + AMP + diphosphate. It catalyses the reaction [ThiS sulfur-carrier protein]-C-terminal Gly-Gly-AMP + S-sulfanyl-L-cysteinyl-[cysteine desulfurase] + AH2 = [ThiS sulfur-carrier protein]-C-terminal-Gly-aminoethanethioate + L-cysteinyl-[cysteine desulfurase] + A + AMP + 2 H(+). It functions in the pathway cofactor biosynthesis; thiamine diphosphate biosynthesis. Functionally, catalyzes the ATP-dependent transfer of a sulfur to tRNA to produce 4-thiouridine in position 8 of tRNAs, which functions as a near-UV photosensor. Also catalyzes the transfer of sulfur to the sulfur carrier protein ThiS, forming ThiS-thiocarboxylate. This is a step in the synthesis of thiazole, in the thiamine biosynthesis pathway. The sulfur is donated as persulfide by IscS. This Tolumonas auensis (strain DSM 9187 / NBRC 110442 / TA 4) protein is tRNA sulfurtransferase.